The primary structure comprises 89 residues: MSRTVFCCKLKQEAEGLEKQPFPGELGKKVFNEVSKQAWNMWLSHQTMLINEYRLNLIEARAREFLKEEMQKYFFGEGSDKPSGYKEIK.

Belongs to the Fe(2+)-trafficking protein family.

Its function is as follows. Could be a mediator in iron transactions between iron acquisition and iron-requiring processes, such as synthesis and/or repair of Fe-S clusters in biosynthetic enzymes. The polypeptide is Probable Fe(2+)-trafficking protein (Legionella pneumophila (strain Lens)).